The sequence spans 364 residues: Monocarboxylate 2-oxoacid-binding periplasmic protein all3028 (364 aa).

An N-terminal signal peptide occupies residues 1–26 (MKRREVLNTAAIATATTALVSCTQTN). Substrate is bound by residues 103 to 104 (YY), glutamine 160, and arginine 181. Glutamine 160 provides a ligand contact to Na(+). Residues glutamate 218, tryptophan 219, and glutamate 244 each coordinate Na(+).

The protein belongs to the bacterial solute-binding protein 7 family. Homodimer. The complex comprises the extracytoplasmic solute receptor protein all3028, and the two putative transmembrane proteins alr3026 and alr3027.

Its subcellular location is the periplasm. With respect to regulation, pyruvate uptake inhibited by 2-oxobutyrate, 2-oxovalerate, 2-oxoisovalerate, 2-oxoisocaproate and 2-oxo-3-methylvalerate. Its function is as follows. Part of the tripartite ATP-independent periplasmic (TRAP) transport system involved in the uptake of monocarboxylate 2-oxoacids. This protein specifically binds monocarboxylate 2-oxoacids including pyruvate, 2-oxobutyrate, 2-oxovalerate, 2-oxoisovalerate, 2-oxoisocaproate and 2-oxo-3-methylvalerate. Is not able to bind mannitol. This Nostoc sp. (strain PCC 7120 / SAG 25.82 / UTEX 2576) protein is Monocarboxylate 2-oxoacid-binding periplasmic protein all3028.